A 75-amino-acid polypeptide reads, in one-letter code: UPF0512 protein C (75 aa).

Belongs to the UPF0512 family.

The sequence is that of UPF0512 protein C from Dictyostelium discoideum (Social amoeba).